We begin with the raw amino-acid sequence, 144 residues long: Peptide methionine sulfoxide reductase B7 (144 aa).

Positions 19–140 (DEEWRAVLSP…NSVSLKFSSA (122 aa)) constitute a MsrB domain. C58, C61, C104, and C107 together coordinate Zn(2+). The cysteines at positions 76 and 129 are disulfide-linked. C129 functions as the Nucleophile in the catalytic mechanism.

Belongs to the MsrB Met sulfoxide reductase family. It depends on Zn(2+) as a cofactor.

It localises to the cytoplasm. The protein resides in the cytosol. It catalyses the reaction L-methionyl-[protein] + [thioredoxin]-disulfide + H2O = L-methionyl-(R)-S-oxide-[protein] + [thioredoxin]-dithiol. Catalyzes the reduction of methionine sulfoxide (MetSO) to methionine in proteins. Plays a protective role against oxidative stress by restoring activity to proteins that have been inactivated by methionine oxidation. MSRB family specifically reduces the MetSO R-enantiomer. The chain is Peptide methionine sulfoxide reductase B7 (MSRB7) from Arabidopsis thaliana (Mouse-ear cress).